Reading from the N-terminus, the 302-residue chain is Vacuolar iron transporter (302 aa).

The Cytoplasmic portion of the chain corresponds to 1–70 (MPASGAGYAG…HTNTSSDYVK (70 aa)). A helical membrane pass occupies residues 71–91 (AVVFGGLDGIVTIFAIVAGCV). The Vacuolar segment spans residues 92 to 99 (GADLSCSQ). A helical membrane pass occupies residues 100-120 (VLMVGLGNLLADAISMGFGEY). Over 121 to 211 (VSAAAEKDFV…IKRGLVMFTA (91 aa)) the chain is Cytoplasmic. Residues Glu-137, Glu-140, Glu-148, Glu-151, Met-185, and Glu-189 each contribute to the Fe cation site. A helical membrane pass occupies residues 212–232 (FCFFGLLPLAGFIGWVAAFGL). The Vacuolar portion of the chain corresponds to 233 to 235 (GAE). A helical transmembrane segment spans residues 236-256 (ADMAFLMACVVSIMTLFILGF). Topologically, residues 257-276 (SKGKFVGQNPTKSACLMAMN) are cytoplasmic. Residues 277–297 (GGCAGTVAYGVGSLLQLVVGA) traverse the membrane as a helical segment. At 298–302 (NLTAA) the chain is on the vacuolar side.

The protein belongs to the CCC1 family.

It localises to the vacuole membrane. The catalysed reaction is Fe(2+)(in) = Fe(2+)(out). In terms of biological role, vacuolar iron transporter involved in the transfer of iron ions from the cytosol to the vacuole for intracellular iron storage. Plays an essential role in detoxification of excess iron. Important for parasite survival within macrophages and parasite virulence in vivo. The polypeptide is Vacuolar iron transporter (Toxoplasma gondii (strain ATCC 50861 / VEG)).